The chain runs to 249 residues: UPF0246 protein Lreu_0493 (249 aa).

Belongs to the UPF0246 family.

The protein is UPF0246 protein Lreu_0493 of Limosilactobacillus reuteri (strain DSM 20016) (Lactobacillus reuteri).